Here is a 660-residue protein sequence, read N- to C-terminus: Polyadenylation factor subunit 2 (660 aa).

The span at Met1–Gly12 shows a compositional bias: basic and acidic residues. Positions Met1–Val32 are disordered. 7 WD repeats span residues Lys94–Ile133, Ala136–Arg176, Gly177–Thr216, Gly219–Thr258, Gly261–Leu301, Gly304–Asp344, and Ala376–Glu415. The disordered stretch occupies residues Lys562–Arg660. Residues Gln566–Ile610 show a composition bias toward pro residues.

Its subcellular location is the nucleus. In terms of biological role, required for 3'-end cleavage and polyadenylation of pre-mRNAs. Also involved in chromosome segregation where it has a role in chromosome attachment to the mitotic spindle. The protein is Polyadenylation factor subunit 2 (paa-1) of Neurospora crassa (strain ATCC 24698 / 74-OR23-1A / CBS 708.71 / DSM 1257 / FGSC 987).